The primary structure comprises 369 residues: Aminomethyltransferase (369 aa).

The protein belongs to the GcvT family. As to quaternary structure, the glycine cleavage system is composed of four proteins: P, T, L and H.

It catalyses the reaction N(6)-[(R)-S(8)-aminomethyldihydrolipoyl]-L-lysyl-[protein] + (6S)-5,6,7,8-tetrahydrofolate = N(6)-[(R)-dihydrolipoyl]-L-lysyl-[protein] + (6R)-5,10-methylene-5,6,7,8-tetrahydrofolate + NH4(+). In terms of biological role, the glycine cleavage system catalyzes the degradation of glycine. The sequence is that of Aminomethyltransferase from Xanthomonas campestris pv. campestris (strain 8004).